Reading from the N-terminus, the 200-residue chain is Small ribosomal subunit protein uS4 (200 aa).

The S4 RNA-binding domain occupies 92-155 (SRLDNLVYRM…RNLTVVKEAL (64 aa)).

This sequence belongs to the universal ribosomal protein uS4 family. Part of the 30S ribosomal subunit. Contacts protein S5. The interaction surface between S4 and S5 is involved in control of translational fidelity.

Its function is as follows. One of the primary rRNA binding proteins, it binds directly to 16S rRNA where it nucleates assembly of the body of the 30S subunit. Functionally, with S5 and S12 plays an important role in translational accuracy. This Shouchella clausii (strain KSM-K16) (Alkalihalobacillus clausii) protein is Small ribosomal subunit protein uS4.